We begin with the raw amino-acid sequence, 535 residues long: Succinate-semialdehyde dehydrogenase, mitochondrial (535 aa).

A mitochondrion-targeting transit peptide spans 1–47 (MATCIWLRSCGARRLGSTFPGCRLRPRAGGLVPASGPAPGPAQLRCY). Lys-126 carries the post-translational modification N6-acetyllysine; alternate. The residue at position 126 (Lys-126) is an N6-succinyllysine; alternate. N6-succinyllysine is present on residues Lys-135 and Lys-184. Residues Arg-213 and 228-231 (KPAE) each bind NAD(+). Arg-213 is a substrate binding site. Lys-265 is modified (N6-acetyllysine; alternate). Lys-265 carries the N6-succinyllysine; alternate modification. 284-289 (GSTTTG) is an NAD(+) binding site. Glu-306 serves as the catalytic Proton acceptor. Arg-334 contributes to the substrate binding site. The active-site Nucleophile is the Cys-340. Cys-340 and Cys-342 are disulfide-bonded. Residue Lys-365 is modified to N6-acetyllysine. Lys-402 is modified (N6-succinyllysine). At Lys-411 the chain carries N6-acetyllysine. Ser-498 lines the substrate pocket. Ser-499 is modified (phosphoserine).

Belongs to the aldehyde dehydrogenase family. As to quaternary structure, homotetramer.

The protein localises to the mitochondrion. The enzyme catalyses succinate semialdehyde + NAD(+) + H2O = succinate + NADH + 2 H(+). It functions in the pathway amino-acid degradation; 4-aminobutanoate degradation. Redox-regulated. Inhibited under oxydizing conditions. Functionally, catalyzes one step in the degradation of the inhibitory neurotransmitter gamma-aminobutyric acid (GABA). This is Succinate-semialdehyde dehydrogenase, mitochondrial (ALDH5A1) from Pan troglodytes (Chimpanzee).